Here is a 331-residue protein sequence, read N- to C-terminus: MSKVAFLGAGSFGTSLGILLGNKGVTVSLWDRDENVINDINVNRKNDKYIKDLTIPTNVTAYKDLDEALNGAEYVVLAVPSHVIRTACKNLKGKINDDVIIINIAKGIEEGTNLRLSQVINQELPNNKVVVLSGPSHAEEVSKGIPTTLVASSECMECAEKVQDLFMDKNFRIYTNDDIIGVEIGGAVKNIIALAAGVCDGIGYGDNSKAALMTRGMAEIARIGIKMGGKAETFFGLTGMGDLIVTCTSMHSRNRRAGILIGQGKTAEEAIKEVGMVVEGIKACKAFYELKEKEGVTMPITDIAYKVLFEGAKAENAVSLLMERDKKKEEI.

NADPH-binding residues include Ser-11, Phe-12, Arg-32, and Lys-106. Positions 106, 134, and 136 each coordinate sn-glycerol 3-phosphate. Residue Ala-138 coordinates NADPH. Positions 189, 242, 252, 253, and 254 each coordinate sn-glycerol 3-phosphate. Lys-189 acts as the Proton acceptor in catalysis. Arg-253 is a binding site for NADPH. 2 residues coordinate NADPH: Val-277 and Glu-279.

This sequence belongs to the NAD-dependent glycerol-3-phosphate dehydrogenase family.

The protein resides in the cytoplasm. The enzyme catalyses sn-glycerol 3-phosphate + NAD(+) = dihydroxyacetone phosphate + NADH + H(+). It catalyses the reaction sn-glycerol 3-phosphate + NADP(+) = dihydroxyacetone phosphate + NADPH + H(+). It functions in the pathway membrane lipid metabolism; glycerophospholipid metabolism. In terms of biological role, catalyzes the reduction of the glycolytic intermediate dihydroxyacetone phosphate (DHAP) to sn-glycerol 3-phosphate (G3P), the key precursor for phospholipid synthesis. This Clostridium perfringens (strain SM101 / Type A) protein is Glycerol-3-phosphate dehydrogenase [NAD(P)+].